Here is a 369-residue protein sequence, read N- to C-terminus: S-adenosylmethionine:tRNA ribosyltransferase-isomerase (369 aa).

The protein belongs to the QueA family. In terms of assembly, monomer.

Its subcellular location is the cytoplasm. It carries out the reaction 7-aminomethyl-7-carbaguanosine(34) in tRNA + S-adenosyl-L-methionine = epoxyqueuosine(34) in tRNA + adenine + L-methionine + 2 H(+). It participates in tRNA modification; tRNA-queuosine biosynthesis. In terms of biological role, transfers and isomerizes the ribose moiety from AdoMet to the 7-aminomethyl group of 7-deazaguanine (preQ1-tRNA) to give epoxyqueuosine (oQ-tRNA). In Synechococcus sp. (strain CC9311), this protein is S-adenosylmethionine:tRNA ribosyltransferase-isomerase.